The following is a 640-amino-acid chain: Threonine--tRNA ligase (640 aa).

The 61-residue stretch at 1–61 folds into the TGS domain; sequence MPIITLPDGS…ERDATLQIIT (61 aa). The interval 242–533 is catalytic; it reads DHRRIGKQLD…LIEHYAGAFP (292 aa). C333, H384, and H510 together coordinate Zn(2+).

Belongs to the class-II aminoacyl-tRNA synthetase family. In terms of assembly, homodimer. Zn(2+) is required as a cofactor.

The protein resides in the cytoplasm. The enzyme catalyses tRNA(Thr) + L-threonine + ATP = L-threonyl-tRNA(Thr) + AMP + diphosphate + H(+). In terms of biological role, catalyzes the attachment of threonine to tRNA(Thr) in a two-step reaction: L-threonine is first activated by ATP to form Thr-AMP and then transferred to the acceptor end of tRNA(Thr). Also edits incorrectly charged L-seryl-tRNA(Thr). The sequence is that of Threonine--tRNA ligase from Pseudomonas paraeruginosa (strain DSM 24068 / PA7) (Pseudomonas aeruginosa (strain PA7)).